A 261-amino-acid polypeptide reads, in one-letter code: Small ribosomal subunit protein uS2 (261 aa).

Residues 223–261 form a disordered region; the sequence is EGKQGQDDSEDVEKEMADKAAAEDDEEESIEVVVEKSED.

It belongs to the universal ribosomal protein uS2 family.

The polypeptide is Small ribosomal subunit protein uS2 (Lactobacillus johnsonii (strain CNCM I-12250 / La1 / NCC 533)).